An 878-amino-acid chain; its full sequence is Alanine--tRNA ligase (878 aa).

4 residues coordinate Zn(2+): His567, His571, Cys669, and His673.

This sequence belongs to the class-II aminoacyl-tRNA synthetase family. Zn(2+) is required as a cofactor.

The protein localises to the cytoplasm. The catalysed reaction is tRNA(Ala) + L-alanine + ATP = L-alanyl-tRNA(Ala) + AMP + diphosphate. Catalyzes the attachment of alanine to tRNA(Ala) in a two-step reaction: alanine is first activated by ATP to form Ala-AMP and then transferred to the acceptor end of tRNA(Ala). Also edits incorrectly charged Ser-tRNA(Ala) and Gly-tRNA(Ala) via its editing domain. This chain is Alanine--tRNA ligase, found in Rickettsia felis (strain ATCC VR-1525 / URRWXCal2) (Rickettsia azadi).